The primary structure comprises 402 residues: Ubiquitin-like modifier-activating enzyme 5 (402 aa).

The ATP site is built by glycine 81, aspartate 102, lysine 125, asparagine 148, and asparagine 182. Zn(2+)-binding residues include cysteine 224 and cysteine 227. Cysteine 248 acts as the Glycyl thioester intermediate in catalysis. Zn(2+) is bound by residues cysteine 301 and cysteine 306. Positions 369–402 are disordered; that stretch reads EAPEKSSETSEETVTTAPPDDASLEDLMAQMKSM.

Belongs to the ubiquitin-activating E1 family. UBA5 subfamily.

E1-like enzyme which activates UFM1. This Drosophila erecta (Fruit fly) protein is Ubiquitin-like modifier-activating enzyme 5.